Here is a 223-residue protein sequence, read N- to C-terminus: Cytidylate kinase (223 aa).

10 to 18 (GPAGSGKSS) serves as a coordination point for ATP.

The protein belongs to the cytidylate kinase family. Type 1 subfamily.

It localises to the cytoplasm. It carries out the reaction CMP + ATP = CDP + ADP. The catalysed reaction is dCMP + ATP = dCDP + ADP. This is Cytidylate kinase from Pseudothermotoga lettingae (strain ATCC BAA-301 / DSM 14385 / NBRC 107922 / TMO) (Thermotoga lettingae).